We begin with the raw amino-acid sequence, 155 residues long: 6,7-dimethyl-8-ribityllumazine synthase (155 aa).

Residues Phe-22, 57–59 (AYE), and 81–83 (SVI) contribute to the 5-amino-6-(D-ribitylamino)uracil site. 86-87 (GT) contacts (2S)-2-hydroxy-3-oxobutyl phosphate. Residue His-88 is the Proton donor of the active site. Residue Phe-113 participates in 5-amino-6-(D-ribitylamino)uracil binding. (2S)-2-hydroxy-3-oxobutyl phosphate is bound at residue Arg-127.

This sequence belongs to the DMRL synthase family. Forms an icosahedral capsid composed of 60 subunits, arranged as a dodecamer of pentamers.

The enzyme catalyses (2S)-2-hydroxy-3-oxobutyl phosphate + 5-amino-6-(D-ribitylamino)uracil = 6,7-dimethyl-8-(1-D-ribityl)lumazine + phosphate + 2 H2O + H(+). The protein operates within cofactor biosynthesis; riboflavin biosynthesis; riboflavin from 2-hydroxy-3-oxobutyl phosphate and 5-amino-6-(D-ribitylamino)uracil: step 1/2. In terms of biological role, catalyzes the formation of 6,7-dimethyl-8-ribityllumazine by condensation of 5-amino-6-(D-ribitylamino)uracil with 3,4-dihydroxy-2-butanone 4-phosphate. This is the penultimate step in the biosynthesis of riboflavin. The polypeptide is 6,7-dimethyl-8-ribityllumazine synthase (Photobacterium phosphoreum).